Consider the following 581-residue polypeptide: Arginine--tRNA ligase (581 aa).

The 'HIGH' region motif lies at 131-141; it reads ANPTGPLHVGH.

It belongs to the class-I aminoacyl-tRNA synthetase family. In terms of assembly, monomer.

It localises to the cytoplasm. The enzyme catalyses tRNA(Arg) + L-arginine + ATP = L-arginyl-tRNA(Arg) + AMP + diphosphate. This Nitrosospira multiformis (strain ATCC 25196 / NCIMB 11849 / C 71) protein is Arginine--tRNA ligase.